We begin with the raw amino-acid sequence, 253 residues long: DNA polymerase sliding clamp 2 (253 aa).

This sequence belongs to the PCNA family. Homotrimer. The subunits circularize to form a toroid; DNA passes through its center. Replication factor C (RFC) is required to load the toroid on the DNA. Interacts with TIP.

Inhibited by interaction with the PCNA inhibitor TIP. Its function is as follows. Sliding clamp subunit that acts as a moving platform for DNA processing. Responsible for tethering the catalytic subunit of DNA polymerase and other proteins to DNA during high-speed replication. This chain is DNA polymerase sliding clamp 2, found in Thermococcus kodakarensis (strain ATCC BAA-918 / JCM 12380 / KOD1) (Pyrococcus kodakaraensis (strain KOD1)).